A 103-amino-acid chain; its full sequence is Protein translation factor SUI1 homolog (103 aa).

It belongs to the SUI1 family.

The polypeptide is Protein translation factor SUI1 homolog (Hyperthermus butylicus (strain DSM 5456 / JCM 9403 / PLM1-5)).